A 118-amino-acid polypeptide reads, in one-letter code: Ribonuclease P protein component (118 aa).

This sequence belongs to the RnpA family. As to quaternary structure, consists of a catalytic RNA component (M1 or rnpB) and a protein subunit.

The catalysed reaction is Endonucleolytic cleavage of RNA, removing 5'-extranucleotides from tRNA precursor.. RNaseP catalyzes the removal of the 5'-leader sequence from pre-tRNA to produce the mature 5'-terminus. It can also cleave other RNA substrates such as 4.5S RNA. The protein component plays an auxiliary but essential role in vivo by binding to the 5'-leader sequence and broadening the substrate specificity of the ribozyme. The chain is Ribonuclease P protein component from Rickettsia typhi (strain ATCC VR-144 / Wilmington).